A 101-amino-acid polypeptide reads, in one-letter code: MYAVIRTGGKQYKVSQGDVLRVETVAGDAGGEVIFDDVLMVGGDEGLKVGEATEGAKVTGTIIRQMRDKKVIVFKKKRRKNYIRTQGHRQNLTVVRISGIS.

It belongs to the bacterial ribosomal protein bL21 family. In terms of assembly, part of the 50S ribosomal subunit. Contacts protein L20.

In terms of biological role, this protein binds to 23S rRNA in the presence of protein L20. The polypeptide is Large ribosomal subunit protein bL21 (Magnetococcus marinus (strain ATCC BAA-1437 / JCM 17883 / MC-1)).